Reading from the N-terminus, the 122-residue chain is Large ribosomal subunit protein uL14 (122 aa).

This sequence belongs to the universal ribosomal protein uL14 family. In terms of assembly, part of the 50S ribosomal subunit. Forms a cluster with proteins L3 and L19. In the 70S ribosome, L14 and L19 interact and together make contacts with the 16S rRNA in bridges B5 and B8.

Binds to 23S rRNA. Forms part of two intersubunit bridges in the 70S ribosome. The sequence is that of Large ribosomal subunit protein uL14 from Spiroplasma citri.